The chain runs to 154 residues: Superoxide dismutase [Cu-Zn] (154 aa).

His-47, His-49, and His-64 together coordinate Cu cation. A disulfide bridge links Cys-58 with Cys-147. Zn(2+) is bound by residues His-64, His-72, His-81, and Asp-84. Residue His-121 participates in Cu cation binding.

It belongs to the Cu-Zn superoxide dismutase family. In terms of assembly, homodimer. Cu cation is required as a cofactor. Requires Zn(2+) as cofactor.

It is found in the cytoplasm. The catalysed reaction is 2 superoxide + 2 H(+) = H2O2 + O2. Its function is as follows. Destroys radicals which are normally produced within the cells and which are toxic to biological systems. The chain is Superoxide dismutase [Cu-Zn] (SODCC) from Pinus sylvestris (Scotch pine).